The primary structure comprises 229 residues: MIRAIVTDIEGTTTDIRFVHNVLFPYARERLERFIRSGEQREPVNLLLNELRGEIHAPAASVDQLIETLFKFMDEDRKSPALKSIQGYIWREGYVNGDFTGHLYPDVVPALRRWSAQDIDIYIYSSGSVPAQKLLFSHSDEGDVTELLSGFFDTHVGAKRQVSSYRNISMKTGVPVHQMLFLSDIREELDAAREAGWKTVQLIRGEPDTQSTHRQVSSFDDIHPEQIPT.

Over residues 208-218 (DTQSTHRQVSS) the composition is skewed to polar residues. Residues 208–229 (DTQSTHRQVSSFDDIHPEQIPT) form a disordered region. Residues 220–229 (DDIHPEQIPT) are compositionally biased toward basic and acidic residues.

The protein belongs to the HAD-like hydrolase superfamily. MasA/MtnC family. In terms of assembly, monomer. The cofactor is Mg(2+).

It catalyses the reaction 5-methylsulfanyl-2,3-dioxopentyl phosphate + H2O = 1,2-dihydroxy-5-(methylsulfanyl)pent-1-en-3-one + phosphate. It participates in amino-acid biosynthesis; L-methionine biosynthesis via salvage pathway; L-methionine from S-methyl-5-thio-alpha-D-ribose 1-phosphate: step 3/6. The protein operates within amino-acid biosynthesis; L-methionine biosynthesis via salvage pathway; L-methionine from S-methyl-5-thio-alpha-D-ribose 1-phosphate: step 4/6. Functionally, bifunctional enzyme that catalyzes the enolization of 2,3-diketo-5-methylthiopentyl-1-phosphate (DK-MTP-1-P) into the intermediate 2-hydroxy-3-keto-5-methylthiopentenyl-1-phosphate (HK-MTPenyl-1-P), which is then dephosphorylated to form the acireductone 1,2-dihydroxy-3-keto-5-methylthiopentene (DHK-MTPene). The protein is Enolase-phosphatase E1 of Cronobacter sakazakii (strain ATCC BAA-894) (Enterobacter sakazakii).